A 101-amino-acid polypeptide reads, in one-letter code: NAD(P)H-quinone oxidoreductase subunit 4L, chloroplastic (101 aa).

3 helical membrane-spanning segments follow: residues 2–22 (MTEY…YGLI), 32–52 (MCLE…SDLF), and 61–81 (IFSI…PAIV).

Belongs to the complex I subunit 4L family. In terms of assembly, NDH is composed of at least 16 different subunits, 5 of which are encoded in the nucleus.

It localises to the plastid. Its subcellular location is the chloroplast thylakoid membrane. The enzyme catalyses a plastoquinone + NADH + (n+1) H(+)(in) = a plastoquinol + NAD(+) + n H(+)(out). It catalyses the reaction a plastoquinone + NADPH + (n+1) H(+)(in) = a plastoquinol + NADP(+) + n H(+)(out). In terms of biological role, NDH shuttles electrons from NAD(P)H:plastoquinone, via FMN and iron-sulfur (Fe-S) centers, to quinones in the photosynthetic chain and possibly in a chloroplast respiratory chain. The immediate electron acceptor for the enzyme in this species is believed to be plastoquinone. Couples the redox reaction to proton translocation, and thus conserves the redox energy in a proton gradient. This is NAD(P)H-quinone oxidoreductase subunit 4L, chloroplastic from Calycanthus floridus var. glaucus (Eastern sweetshrub).